We begin with the raw amino-acid sequence, 278 residues long: 3-methyl-2-oxobutanoate hydroxymethyltransferase (278 aa).

Mg(2+) contacts are provided by aspartate 43 and aspartate 82. 3-methyl-2-oxobutanoate is bound by residues 43–44 (DS), aspartate 82, and lysine 112. Position 114 (glutamate 114) interacts with Mg(2+). Glutamate 181 serves as the catalytic Proton acceptor.

Belongs to the PanB family. As to quaternary structure, homodecamer; pentamer of dimers. Requires Mg(2+) as cofactor.

The protein resides in the cytoplasm. The catalysed reaction is 3-methyl-2-oxobutanoate + (6R)-5,10-methylene-5,6,7,8-tetrahydrofolate + H2O = 2-dehydropantoate + (6S)-5,6,7,8-tetrahydrofolate. It functions in the pathway cofactor biosynthesis; (R)-pantothenate biosynthesis; (R)-pantoate from 3-methyl-2-oxobutanoate: step 1/2. Functionally, catalyzes the reversible reaction in which hydroxymethyl group from 5,10-methylenetetrahydrofolate is transferred onto alpha-ketoisovalerate to form ketopantoate. The polypeptide is 3-methyl-2-oxobutanoate hydroxymethyltransferase (Desulfitobacterium hafniense (strain Y51)).